The following is a 124-amino-acid chain: Apolipoprotein C-IV (124 aa).

The first 27 residues, 1–27, serve as a signal peptide directing secretion; it reads MLLPRRGLRTLPSLCLYILVLVWVVAC.

The protein belongs to the apolipoprotein C4 family. In terms of processing, glycosylated; contains sialic acid. Present in up to five sialylated isoforms. As to expression, blood plasma, associated primarily with VLDL and HDL. Expressed mainly in the liver.

The protein localises to the secreted. May participate in lipoprotein metabolism. The protein is Apolipoprotein C-IV (APOC4) of Oryctolagus cuniculus (Rabbit).